Consider the following 328-residue polypeptide: Biotin synthase (328 aa).

Residues 48–275 (NRIQLSKLLN…KSHVRLTAGR (228 aa)) enclose the Radical SAM core domain. Residues Cys-63, Cys-67, and Cys-70 each contribute to the [4Fe-4S] cluster site. The [2Fe-2S] cluster site is built by Cys-107, Cys-138, Cys-198, and Arg-270.

It belongs to the radical SAM superfamily. Biotin synthase family. As to quaternary structure, homodimer. [4Fe-4S] cluster serves as cofactor. Requires [2Fe-2S] cluster as cofactor.

It carries out the reaction (4R,5S)-dethiobiotin + (sulfur carrier)-SH + 2 reduced [2Fe-2S]-[ferredoxin] + 2 S-adenosyl-L-methionine = (sulfur carrier)-H + biotin + 2 5'-deoxyadenosine + 2 L-methionine + 2 oxidized [2Fe-2S]-[ferredoxin]. The protein operates within cofactor biosynthesis; biotin biosynthesis; biotin from 7,8-diaminononanoate: step 2/2. Catalyzes the conversion of dethiobiotin (DTB) to biotin by the insertion of a sulfur atom into dethiobiotin via a radical-based mechanism. This chain is Biotin synthase, found in Brucella abortus (strain S19).